The chain runs to 254 residues: MAAGAVAWLLLWAAWLVGRLAADFSDAPFSAGKGVRATCSEIILRQEFLKDGFHRDLLIKVKFGESIEDLQTCRLLIKHYIPPGLFVDPYELASLRERNLTEAVMLSESFNIEAPNYLSNESAVLIYARQDAQCIDCFQAFLPVHYRYHRPHKKDGDTLIVVNNPDLLMYCDQEFPILKCWAQSEVAAPCALKSEEICQWKSMQYKSILKNLTVQVPVGLTIHTSLVCSVTLLITILCSTLILLAVFKYGHFSL.

The signal sequence occupies residues 1–22 (MAAGAVAWLLLWAAWLVGRLAA). Residues 23 to 226 (DFSDAPFSAG…PVGLTIHTSL (204 aa)) are Lumenal-facing. Residue N211 is glycosylated (N-linked (GlcNAc...) asparagine). Residues 227–247 (VCSVTLLITILCSTLILLAVF) traverse the membrane as a helical segment. Residues 248-254 (KYGHFSL) are Cytoplasmic-facing.

This sequence belongs to the PIGX family. Part of the glycosylphosphatidylinositol-mannosyltransferase I complex that is composed of PIGM and PIGX. Interacts with PIGM; PIGX stabilizes PIGM.

Its subcellular location is the endoplasmic reticulum membrane. Its pathway is glycolipid biosynthesis; glycosylphosphatidylinositol-anchor biosynthesis. In terms of biological role, stabilizing subunit of the glycosylphosphatidylinositol-mannosyltransferase I complex which catalyzes the transfer of the first mannose, via an alpha-1,4 bond from a dolichol-phosphate-mannose (Dol-P-Man) to the glucosaminyl acyl phosphatidylinositol (GlcN-(acyl)PI) intermediate to generate alpha-D-Man-(1-&gt;4)-alpha-D-GlcN-(1-&gt;6)-(1-radyl,2-acyl-sn-glycero-3-phospho)-2-acyl-inositol and participates in the sixth step of the glycosylphosphatidylinositol-anchor biosynthesis. Probably acts by stabilizing the mannosyltransferase PIGM. This is GPI alpha-1,4-mannosyltransferase I, stabilizing subunit from Mus musculus (Mouse).